A 241-amino-acid chain; its full sequence is Phosphatidylcholine synthase (241 aa).

Residues 1 to 15 (MKFFNYRRVPYAEIR) are Cytoplasmic-facing. The helical transmembrane segment at 16-36 (AFSVHILTASGSFLAFLGVVA) threads the bilayer. Topologically, residues 37 to 41 (AAEHR) are periplasmic. A helical membrane pass occupies residues 42–62 (FVDMFWWLGLALLVDGIDGPI). Residues 63 to 76 (ARKVQVKEVLPNWS) are Cytoplasmic-facing. A helical membrane pass occupies residues 77–97 (GDTLDNVIDYVTYVLLPAFAL). Topologically, residues 98–100 (YQS) are periplasmic. The helical transmembrane segment at 101-121 (GMIGEPWSFVAAGAIVVSSAI) threads the bilayer. The Cytoplasmic portion of the chain corresponds to 122 to 133 (YYADMGMKTDEY). The chain crosses the membrane as a helical span at residues 134 to 154 (FFSGFPVVWNMVVFTLFVIQA). Topologically, residues 155–156 (SE) are periplasmic. Residues 157-177 (VTASIVVFLSVILTFLPINFL) form a helical membrane-spanning segment. The Cytoplasmic segment spans residues 178–187 (HPVRVKRLRP). Residues 188 to 208 (LNLGIFLVWSVLGMYALLLHF) form a helical membrane-spanning segment. The Periplasmic segment spans residues 209-211 (ETP). The chain crosses the membrane as a helical span at residues 212–232 (PWVVVGVVATGLYLYVIGFIL). The Cytoplasmic segment spans residues 233 to 241 (QIFPKLGRA).

It belongs to the CDP-alcohol phosphatidyltransferase class-I family. The cofactor is Mn(2+).

It is found in the cell inner membrane. The catalysed reaction is a CDP-1,2-diacyl-sn-glycerol + choline = a 1,2-diacyl-sn-glycero-3-phosphocholine + CMP + H(+). Activated by CDP-diacylglycerol especially in the presence of Triton X-100 (0.1% w/v) at concentrations where micelles are formed. Maximal activation by Triton X-100 at 0.2% w/v, but higher concentrations become inhibitory. Inhibited by EDTA and high concentrations of choline. Its function is as follows. Condenses choline with CDP-diglyceride to produce phosphatidylcholine and CMP. In Rhizobium meliloti (strain 1021) (Ensifer meliloti), this protein is Phosphatidylcholine synthase (pcs).